The primary structure comprises 399 residues: Elongation factor Tu 1 (399 aa).

The tr-type G domain occupies 10–209 (KPHVNIGTIG…QVDTYIPEPE (200 aa)). The tract at residues 19–26 (GHVDHGKT) is G1. GTP is bound at residue 19–26 (GHVDHGKT). A Mg(2+)-binding site is contributed by Thr26. The segment at 60–64 (GITIA) is G2. The segment at 81–84 (DCPG) is G3. Residues 81–85 (DCPGH) and 136–139 (NKAD) contribute to the GTP site. Residues 136-139 (NKAD) are G4. Residues 174-176 (SAL) form a G5 region.

Belongs to the TRAFAC class translation factor GTPase superfamily. Classic translation factor GTPase family. EF-Tu/EF-1A subfamily. In terms of assembly, monomer.

It localises to the cytoplasm. It catalyses the reaction GTP + H2O = GDP + phosphate + H(+). In terms of biological role, GTP hydrolase that promotes the GTP-dependent binding of aminoacyl-tRNA to the A-site of ribosomes during protein biosynthesis. This chain is Elongation factor Tu 1, found in Syntrophotalea carbinolica (strain DSM 2380 / NBRC 103641 / GraBd1) (Pelobacter carbinolicus).